The sequence spans 221 residues: Phosphoglycolate phosphatase (221 aa).

Aspartate 10 functions as the Nucleophile in the catalytic mechanism. Aspartate 10, aspartate 12, and aspartate 168 together coordinate Mg(2+).

It belongs to the HAD-like hydrolase superfamily. CbbY/CbbZ/Gph/YieH family. Mg(2+) serves as cofactor.

The enzyme catalyses 2-phosphoglycolate + H2O = glycolate + phosphate. The protein operates within organic acid metabolism; glycolate biosynthesis; glycolate from 2-phosphoglycolate: step 1/1. In terms of biological role, specifically catalyzes the dephosphorylation of 2-phosphoglycolate. Is involved in the dissimilation of the intracellular 2-phosphoglycolate formed during the DNA repair of 3'-phosphoglycolate ends, a major class of DNA lesions induced by oxidative stress. The sequence is that of Phosphoglycolate phosphatase from Xanthomonas campestris pv. campestris (strain 8004).